The sequence spans 230 residues: Large ribosomal subunit protein uL1 (230 aa).

It belongs to the universal ribosomal protein uL1 family. As to quaternary structure, part of the 50S ribosomal subunit.

Functionally, binds directly to 23S rRNA. The L1 stalk is quite mobile in the ribosome, and is involved in E site tRNA release. Protein L1 is also a translational repressor protein, it controls the translation of the L11 operon by binding to its mRNA. This Chromohalobacter salexigens (strain ATCC BAA-138 / DSM 3043 / CIP 106854 / NCIMB 13768 / 1H11) protein is Large ribosomal subunit protein uL1.